Reading from the N-terminus, the 325-residue chain is Tetraacyldisaccharide 4'-kinase (325 aa).

55–62 (TAGGNGKT) is a binding site for ATP.

This sequence belongs to the LpxK family.

It catalyses the reaction a lipid A disaccharide + ATP = a lipid IVA + ADP + H(+). Its pathway is glycolipid biosynthesis; lipid IV(A) biosynthesis; lipid IV(A) from (3R)-3-hydroxytetradecanoyl-[acyl-carrier-protein] and UDP-N-acetyl-alpha-D-glucosamine: step 6/6. Functionally, transfers the gamma-phosphate of ATP to the 4'-position of a tetraacyldisaccharide 1-phosphate intermediate (termed DS-1-P) to form tetraacyldisaccharide 1,4'-bis-phosphate (lipid IVA). The chain is Tetraacyldisaccharide 4'-kinase from Salmonella choleraesuis (strain SC-B67).